We begin with the raw amino-acid sequence, 236 residues long: 7-cyano-7-deazaguanine synthase 2 (236 aa).

An ATP-binding site is contributed by F11–L21. Zn(2+) is bound by residues C199, C214, C217, and C220.

Belongs to the QueC family. The cofactor is Zn(2+).

It catalyses the reaction 7-carboxy-7-deazaguanine + NH4(+) + ATP = 7-cyano-7-deazaguanine + ADP + phosphate + H2O + H(+). It functions in the pathway purine metabolism; 7-cyano-7-deazaguanine biosynthesis. Functionally, catalyzes the ATP-dependent conversion of 7-carboxy-7-deazaguanine (CDG) to 7-cyano-7-deazaguanine (preQ(0)). The sequence is that of 7-cyano-7-deazaguanine synthase 2 from Sphingopyxis alaskensis (strain DSM 13593 / LMG 18877 / RB2256) (Sphingomonas alaskensis).